The following is a 75-amino-acid chain: Putative membrane protein insertion efficiency factor (75 aa).

Belongs to the UPF0161 family.

Its subcellular location is the cell inner membrane. In terms of biological role, could be involved in insertion of integral membrane proteins into the membrane. This chain is Putative membrane protein insertion efficiency factor, found in Leptospira biflexa serovar Patoc (strain Patoc 1 / ATCC 23582 / Paris).